Consider the following 3411-residue polypeptide: Genome polyprotein (3411 aa).

Over 1-104 (MSGRKAQGKT…LSSRKRRSHD (104 aa)) the chain is Cytoplasmic. The hydrophobic; homodimerization of capsid protein C stretch occupies residues 38–72 (PGPSRGVQGFIFFFLFNILTGKKITAHLKRLWKML). A propeptide spans 102-121 (SHDVLTVQFLILGMLLMTGG) (ER anchor for the capsid protein C, removed in mature form by serine protease NS3). Residues 105–125 (VLTVQFLILGMLLMTGGVTLV) traverse the membrane as a helical segment. The Extracellular portion of the chain corresponds to 126–244 (RKNRWLLLNV…GERQLQKIER (119 aa)). 2 N-linked (GlcNAc...) asparagine; by host glycosylation sites follow: Asn134 and Asn150. The chain crosses the membrane as a helical span at residues 245–265 (WFVRNPFFAVTALTIAYLVGS). Over 266–270 (NMTQR) the chain is Cytoplasmic. The helical transmembrane segment at 271-285 (VVIALLVLAVGPAYS) threads the bilayer. Topologically, residues 286–730 (AHCIGITDRD…TVFGSAFQGL (445 aa)) are extracellular. Intrachain disulfides connect Cys288/Cys315, Cys345/Cys401, Cys345/Cys406, Cys359/Cys390, Cys377/Cys401, Cys377/Cys406, Cys467/Cys568, and Cys585/Cys615. Residues 383 to 396 (DRGWGNGCGLFGKG) are fusion peptide. The chain crosses the membrane as a helical span at residues 731-751 (FGGLNWITKVIIGAVLIWVGI). At 752-757 (NTRNMT) the chain is on the extracellular side. The chain crosses the membrane as a helical span at residues 758 to 778 (MSMSMILVGVIMMFLSLGVGA). Topologically, residues 779 to 1132 (DQGCAINFAK…LVRSWVTAGE (354 aa)) are extracellular. Intrachain disulfides connect Cys782/Cys793, Cys833/Cys921, Cys957/Cys1002, Cys1058/Cys1107, Cys1069/Cys1091, and Cys1090/Cys1094. N-linked (GlcNAc...) asparagine; by host glycosylation is found at Asn908 and Asn986. The chain crosses the membrane as a helical span at residues 1133–1153 (IHAVPFGLVSMMIALEVVLRK). Over 1154–1201 (RQGPKQMLVGGVVLLGAMLVGQVTLLDLLKLTVAVGLHFHEMNNGGDA) the chain is Cytoplasmic. Residues 1202–1222 (MYMALIAAFSVRPGLLIGFGL) traverse the membrane as a helical segment. Topologically, residues 1223–1287 (RTLWSPRERL…ILPLMALLTP (65 aa)) are lumenal. The helical transmembrane segment at 1288–1308 (VTMAEVRLATMLFCTVVIIGV) threads the bilayer. The Cytoplasmic portion of the chain corresponds to 1309–1355 (LYQNSKDTSMQKTIPLVALTLTSYLGLTQPFLGLCAFLATRIFGRRS). Residues 1356–1376 (IPVNEALAAAGLVGVLAGLAF) traverse the membrane as a helical segment. The Lumenal portion of the chain corresponds to 1377–1378 (QE). Residues 1379–1399 (MENFLGPIAVGGILMMLVSVA) traverse the membrane as a helical segment. The Cytoplasmic portion of the chain corresponds to 1400 to 1456 (GRVDGLELKKLGEVAWEEEAEISGSSARYDVALSEQGEFKLLSEEKVPWDQVVMTSL). The interval 1407–1446 (LKKLGEVAWEEEAEISGSSARYDVALSEQGEFKLLSEEKV) is interacts with and activates NS3 protease. The helical intramembrane region spans 1457–1477 (ALVGAAIHPFALLLVLAGWLF). Residues 1478–2157 (HVRGARRSGD…RNALSMMPEA (680 aa)) lie on the Cytoplasmic side of the membrane. The Peptidase S7 domain occupies 1485–1665 (SGDVLWDIPT…EVKEEGKEEL (181 aa)). Residues His1537, Asp1561, and Ser1622 each act as charge relay system; for serine protease NS3 activity in the active site. Residues 1669-1825 (PTMLKKGKTT…HSNGEIEDVQ (157 aa)) form the Helicase ATP-binding domain. The tract at residues 1673–1676 (KKGK) is important for RNA-binding. Position 1682–1689 (1682–1689 (FHPGAGKT)) interacts with ATP. The DEAH box signature appears at 1773–1776 (DEAH). A Helicase C-terminal domain is found at 1820–1997 (EIEDVQTDIP…VRGGMVAPLY (178 aa)). Lys1877 bears the N6-acetyllysine; by host mark. Positions 1942-1961 (AAQRRGRIGRNPNRDGDSYY) are disordered. A helical membrane pass occupies residues 2158–2178 (MTIVMLFILAGLLTSGMVIFF). Residues 2179-2186 (MSPKGISR) lie on the Lumenal side of the membrane. Positions 2187-2207 (MSMAMGTMAGCGYLMFLGGVK) form an intramembrane region, helical. The Lumenal segment spans residues 2208–2209 (PT). A helical membrane pass occupies residues 2210–2230 (HISYIMLIFFVLMVVVIPEPG). Topologically, residues 2231–2241 (QQRSIQDNQVA) are cytoplasmic. Residues 2242–2262 (FLIIGILTLVSVVAANELGML) form a helical membrane-spanning segment. Residues 2263–2293 (EKTKEDLFGKKNSIPSSASPWSWPDLDLKPG) are Lumenal-facing. Residues 2294-2314 (AAWTVYVGIVTMLSPMLHHWI) constitute an intramembrane region (helical). Topologically, residues 2315–2360 (KVEYGNLSLSGIAQSASVLSFMDKGIPFMKMNISVIMLLISGWNSI) are lumenal. A helical transmembrane segment spans residues 2361–2380 (TVMPLLCGIGCAMLHWSLIL). Topologically, residues 2381–2421 (PGIKAQQSKLAQRRVFHGVAKNPVVDGNPTVDIEEAPEMPV) are cytoplasmic. A helical membrane pass occupies residues 2422–2442 (LYEKKLALYLLLALSLASVAM). The Lumenal segment spans residues 2443–2445 (CRT). Residues 2446–2466 (PFSLAEGIVLASAALGPLIEG) form a helical membrane-spanning segment. Topologically, residues 2467–3411 (NTSLLWNGPM…DADLQPGELI (945 aa)) are cytoplasmic. One can recognise an mRNA cap 0-1 NS5-type MT domain in the interval 2507 to 2771 (GTANGKTLGE…DVTLPIGTRS (265 aa)). Residue Ser2562 participates in S-adenosyl-L-methionine binding. At Ser2562 the chain carries Phosphoserine. Lys2567 functions as the For 2'-O-MTase activity in the catalytic mechanism. S-adenosyl-L-methionine-binding residues include Gly2592, Trp2593, Thr2610, Leu2611, Asp2637, and Ile2638. Catalysis depends on Asp2652, which acts as the For 2'-O-MTase activity. S-adenosyl-L-methionine is bound at residue Ile2653. Active-site for 2'-O-MTase activity residues include Lys2688 and Glu2724. Tyr2726 contributes to the S-adenosyl-L-methionine binding site. Residues 2878–2911 (RKIMKVVNRWLFRHLAREKNPRLCTKEEFIAKVR) carry the Nuclear localization signal motif. Glu2945, His2949, Cys2954, and Cys2957 together coordinate Zn(2+). Residues 3035 to 3187 (GGFYADDTAG…RPIDDRFGLA (153 aa)) form the RdRp catalytic domain. Zn(2+) contacts are provided by His3222, Cys3238, and Cys3357.

The protein in the N-terminal section; belongs to the class I-like SAM-binding methyltransferase superfamily. mRNA cap 0-1 NS5-type methyltransferase family. In terms of assembly, homodimer. Interacts (via N-terminus) with host EXOC1 (via C-terminus); this interaction results in EXOC1 degradation through the proteasome degradation pathway. As to quaternary structure, forms heterodimers with envelope protein E in the endoplasmic reticulum and Golgi. Homodimer; in the endoplasmic reticulum and Golgi. Interacts with protein prM. Interacts with non-structural protein 1. In terms of assembly, homodimer; Homohexamer when secreted. Interacts with envelope protein E. As to quaternary structure, interacts (via N-terminus) with serine protease NS3. Forms a heterodimer with serine protease NS3. May form homooligomers. In terms of assembly, forms a heterodimer with NS2B. Interacts with non-structural protein 2A (via N-terminus). Interacts with NS4B. Interacts with unphosphorylated RNA-directed RNA polymerase NS5; this interaction stimulates RNA-directed RNA polymerase NS5 guanylyltransferase activity. NS3 interacts with host PDCD6IP; this interaction contributes to virion release. As to quaternary structure, interacts with serine protease NS3. Homodimer. Interacts with host STAT2; this interaction prevents the establishment of cellular antiviral state. Interacts with serine protease NS3. Interacts with host TRIM23; this interaction leads to NS5 ubiquitination. Post-translationally, specific enzymatic cleavages in vivo yield mature proteins. The nascent capsid protein C contains a C-terminal hydrophobic domain that act as a signal sequence for translocation of prM into the lumen of the ER. Mature capsid protein C is cleaved at a site upstream of this hydrophobic domain by NS3. prM is cleaved in post-Golgi vesicles by a host furin, releasing the mature small envelope protein M, and peptide pr. Non-structural protein 2A-alpha, a C-terminally truncated form of non-structural protein 2A, results from partial cleavage by NS3. Specific enzymatic cleavages in vivo yield mature proteins peptide 2K acts as a signal sequence and is removed from the N-terminus of NS4B by the host signal peptidase in the ER lumen. Signal cleavage at the 2K-4B site requires a prior NS3 protease-mediated cleavage at the 4A-2K site. Cleaved in post-Golgi vesicles by a host furin, releasing the mature small envelope protein M, and peptide pr. This cleavage is incomplete as up to 30% of viral particles still carry uncleaved prM. In terms of processing, N-glycosylated. Post-translationally, N-glycosylated. The excreted form is glycosylated and this is required for efficient secretion of the protein from infected cells. Polyubiquitinated; ubiquitination is probably mediated by host TRIM23 and is prerequisite for NS5-STAT2 interaction. NS5 is not ISGylated or sumoylated. In terms of processing, phosphorylated on serines residues. This phosphorylation may trigger NS5 nuclear localization. Post-translationally, acetylated by host KAT5. Acetylation modulates NS3 RNA-binding and -unwinding activities and plays an important role for viral replication.

The protein resides in the virion. The protein localises to the host nucleus. Its subcellular location is the host cytoplasm. It is found in the host perinuclear region. It localises to the secreted. The protein resides in the virion membrane. The protein localises to the host endoplasmic reticulum membrane. It catalyses the reaction Selective hydrolysis of -Xaa-Xaa-|-Yaa- bonds in which each of the Xaa can be either Arg or Lys and Yaa can be either Ser or Ala.. The catalysed reaction is RNA(n) + a ribonucleoside 5'-triphosphate = RNA(n+1) + diphosphate. It carries out the reaction a ribonucleoside 5'-triphosphate + H2O = a ribonucleoside 5'-diphosphate + phosphate + H(+). The enzyme catalyses ATP + H2O = ADP + phosphate + H(+). It catalyses the reaction a 5'-end (5'-triphosphoguanosine)-ribonucleoside in mRNA + S-adenosyl-L-methionine = a 5'-end (N(7)-methyl 5'-triphosphoguanosine)-ribonucleoside in mRNA + S-adenosyl-L-homocysteine. The catalysed reaction is a 5'-end (N(7)-methyl 5'-triphosphoguanosine)-ribonucleoside in mRNA + S-adenosyl-L-methionine = a 5'-end (N(7)-methyl 5'-triphosphoguanosine)-(2'-O-methyl-ribonucleoside) in mRNA + S-adenosyl-L-homocysteine + H(+). Plays a role in virus budding by binding to the cell membrane and gathering the viral RNA into a nucleocapsid that forms the core of a mature virus particle. During virus entry, may induce genome penetration into the host cytoplasm after hemifusion induced by the surface proteins. Can migrate to the cell nucleus where it modulates host functions. Its function is as follows. Inhibits RNA silencing by interfering with host Dicer. Functionally, prevents premature fusion activity of envelope proteins in trans-Golgi by binding to envelope protein E at pH6.0. After virion release in extracellular space, gets dissociated from E dimers. In terms of biological role, acts as a chaperone for envelope protein E during intracellular virion assembly by masking and inactivating envelope protein E fusion peptide. prM is the only viral peptide matured by host furin in the trans-Golgi network probably to avoid catastrophic activation of the viral fusion activity in acidic Golgi compartment prior to virion release. prM-E cleavage is inefficient, and many virions are only partially matured. These uncleaved prM would play a role in immune evasion. May play a role in virus budding. Exerts cytotoxic effects by activating a mitochondrial apoptotic pathway through M ectodomain. May display a viroporin activity. Its function is as follows. Binds to host cell surface receptor and mediates fusion between viral and cellular membranes. Envelope protein is synthesized in the endoplasmic reticulum in the form of heterodimer with protein prM. They play a role in virion budding in the ER, and the newly formed immature particle is covered with 60 spikes composed of heterodimer between precursor prM and envelope protein E. The virion is transported to the Golgi apparatus where the low pH causes dissociation of PrM-E heterodimers and formation of E homodimers. prM-E cleavage is inefficient, and many virions are only partially matured. These uncleaved prM would play a role in immune evasion. Functionally, involved in immune evasion, pathogenesis and viral replication. Once cleaved off the polyprotein, is targeted to three destinations: the viral replication cycle, the plasma membrane and the extracellular compartment. Essential for viral replication. Required for formation of the replication complex and recruitment of other non-structural proteins to the ER-derived membrane structures. Excreted as a hexameric lipoparticle that plays a role against host immune response. Antagonizing the complement function. Binds to the host macrophages and dendritic cells. Inhibits signal transduction originating from Toll-like receptor 3 (TLR3). In terms of biological role, component of the viral RNA replication complex that functions in virion assembly and antagonizes the host immune response. Required cofactor for the serine protease function of NS3. May have membrane-destabilizing activity and form viroporins. Its function is as follows. Displays three enzymatic activities: serine protease, NTPase and RNA helicase. NS3 serine protease, in association with NS2B, performs its autocleavage and cleaves the polyprotein at dibasic sites in the cytoplasm: C-prM, NS2A-NS2B, NS2B-NS3, NS3-NS4A, NS4A-2K and NS4B-NS5. NS3 RNA helicase binds RNA and unwinds dsRNA in the 3' to 5' direction. Also plays a role in virus assembly. Functionally, regulates the ATPase activity of the NS3 helicase activity. NS4A allows NS3 helicase to conserve energy during unwinding. In terms of biological role, functions as a signal peptide for NS4B and is required for the interferon antagonism activity of the latter. Induces the formation of ER-derived membrane vesicles where the viral replication takes place. Inhibits interferon (IFN)-induced host STAT1 phosphorylation and nuclear translocation, thereby preventing the establishment of cellular antiviral state by blocking the IFN-alpha/beta pathway. Its function is as follows. Replicates the viral (+) and (-) RNA genome, and performs the capping of genomes in the cytoplasm. NS5 methylates viral RNA cap at guanine N-7 and ribose 2'-O positions. Besides its role in RNA genome replication, also prevents the establishment of cellular antiviral state by blocking the interferon-alpha/beta (IFN-alpha/beta) signaling pathway. IFN-I induces binding of NS5 to host IFN-activated transcription factor STAT2, preventing its transcriptional activity. Host TRIM23 is the E3 ligase that interacts with and polyubiquitinates NS5 to promote its binding to STAT2 and trigger IFN-I signaling inhibition. This is Genome polyprotein from Yellow fever virus (strain French neurotropic vaccine FNV) (YFV).